We begin with the raw amino-acid sequence, 1207 residues long: DNA-directed RNA polymerase subunit beta' (1207 aa).

Zn(2+) is bound by residues Cys-60, Cys-62, Cys-75, and Cys-78. Residues Asp-449, Asp-451, and Asp-453 each contribute to the Mg(2+) site. 4 residues coordinate Zn(2+): Cys-822, Cys-896, Cys-903, and Cys-906.

It belongs to the RNA polymerase beta' chain family. As to quaternary structure, the RNAP catalytic core consists of 2 alpha, 1 beta, 1 beta' and 1 omega subunit. When a sigma factor is associated with the core the holoenzyme is formed, which can initiate transcription. Mg(2+) is required as a cofactor. Zn(2+) serves as cofactor.

It carries out the reaction RNA(n) + a ribonucleoside 5'-triphosphate = RNA(n+1) + diphosphate. Its function is as follows. DNA-dependent RNA polymerase catalyzes the transcription of DNA into RNA using the four ribonucleoside triphosphates as substrates. In Staphylococcus aureus (strain USA300), this protein is DNA-directed RNA polymerase subunit beta'.